A 444-amino-acid polypeptide reads, in one-letter code: Ribosomal protein uS12 methylthiotransferase RimO (444 aa).

Residues 2 to 118 (LKIALESLGC…IDKILKELSE (117 aa)) enclose the MTTase N-terminal domain. [4Fe-4S] cluster-binding residues include Cys-11, Cys-47, Cys-81, Cys-155, Cys-159, and Cys-162. Residues 141 to 371 (STPSYMAYLK…MMIQQKISEE (231 aa)) form the Radical SAM core domain. The TRAM domain maps to 374 to 441 (DKKIGKTYEV…EYDLMGDVLY (68 aa)).

Belongs to the methylthiotransferase family. RimO subfamily. [4Fe-4S] cluster serves as cofactor.

The protein localises to the cytoplasm. It carries out the reaction L-aspartate(89)-[ribosomal protein uS12]-hydrogen + (sulfur carrier)-SH + AH2 + 2 S-adenosyl-L-methionine = 3-methylsulfanyl-L-aspartate(89)-[ribosomal protein uS12]-hydrogen + (sulfur carrier)-H + 5'-deoxyadenosine + L-methionine + A + S-adenosyl-L-homocysteine + 2 H(+). Catalyzes the methylthiolation of an aspartic acid residue of ribosomal protein uS12. This Clostridioides difficile (strain 630) (Peptoclostridium difficile) protein is Ribosomal protein uS12 methylthiotransferase RimO.